Here is a 156-residue protein sequence, read N- to C-terminus: Small ribosomal subunit protein uS7 (156 aa).

This sequence belongs to the universal ribosomal protein uS7 family. Part of the 30S ribosomal subunit. Contacts proteins S9 and S11.

Its function is as follows. One of the primary rRNA binding proteins, it binds directly to 16S rRNA where it nucleates assembly of the head domain of the 30S subunit. Is located at the subunit interface close to the decoding center, probably blocks exit of the E-site tRNA. The protein is Small ribosomal subunit protein uS7 of Limosilactobacillus reuteri (strain DSM 20016) (Lactobacillus reuteri).